A 184-amino-acid chain; its full sequence is Der GTPase-activating protein YihI (184 aa).

The tract at residues 1-107 is disordered; it reads MNRPVKGAAD…VVAAKPTMSP (107 aa). The segment covering 21–32 has biased composition (basic and acidic residues); sequence TREELEREARER. The segment covering 80 to 95 has biased composition (low complexity); sequence SAVAKPKPKSKPSAPV.

The protein belongs to the YihI family. In terms of assembly, interacts with Der.

In terms of biological role, a GTPase-activating protein (GAP) that modifies Der/EngA GTPase function. May play a role in ribosome biogenesis. The protein is Der GTPase-activating protein YihI of Pectobacterium carotovorum subsp. carotovorum (strain PC1).